The sequence spans 601 residues: Sulfite reductase [NADPH] flavoprotein alpha-component (601 aa).

Residues 64–202 (ITLISASQTG…SAQQWRQQIV (139 aa)) enclose the Flavodoxin-like domain. Residues 70 to 75 (SQTGNA), 117 to 120 (STQG), and 153 to 162 (LGDTSYEHFC) each bind FMN. The FAD-binding FR-type domain maps to 236–450 (AAPLTAQLSV…IEHNDNFRLP (215 aa)). FAD contacts are provided by residues Thr-324, Lys-358, 388–391 (RLYS), 406–408 (TVG), Tyr-412, and 421–424 (GGAS). NADP(+) contacts are provided by residues 521–522 (SR), 527–531 (KIYVQ), and Asp-563. Residue Tyr-601 coordinates FAD.

Belongs to the NADPH-dependent sulphite reductase flavoprotein subunit CysJ family. This sequence in the N-terminal section; belongs to the flavodoxin family. The protein in the C-terminal section; belongs to the flavoprotein pyridine nucleotide cytochrome reductase family. As to quaternary structure, alpha(8)-beta(8). The alpha component is a flavoprotein, the beta component is a hemoprotein. Requires FAD as cofactor. FMN serves as cofactor.

It catalyses the reaction hydrogen sulfide + 3 NADP(+) + 3 H2O = sulfite + 3 NADPH + 4 H(+). It participates in sulfur metabolism; hydrogen sulfide biosynthesis; hydrogen sulfide from sulfite (NADPH route): step 1/1. Its function is as follows. Component of the sulfite reductase complex that catalyzes the 6-electron reduction of sulfite to sulfide. This is one of several activities required for the biosynthesis of L-cysteine from sulfate. The flavoprotein component catalyzes the electron flow from NADPH -&gt; FAD -&gt; FMN to the hemoprotein component. The sequence is that of Sulfite reductase [NADPH] flavoprotein alpha-component from Yersinia enterocolitica serotype O:8 / biotype 1B (strain NCTC 13174 / 8081).